We begin with the raw amino-acid sequence, 210 residues long: Large ribosomal subunit protein uL4 (210 aa).

Residues 41–52 are compositionally biased toward polar residues; it reads QTNARQGTASTK. Residues 41–71 form a disordered region; that stretch reads QTNARQGTASTKTRAEVRGGGRKPWRQKGTG. A compositionally biased stretch (basic residues) spans 60–71; it reads GGRKPWRQKGTG.

It belongs to the universal ribosomal protein uL4 family. As to quaternary structure, part of the 50S ribosomal subunit.

In terms of biological role, one of the primary rRNA binding proteins, this protein initially binds near the 5'-end of the 23S rRNA. It is important during the early stages of 50S assembly. It makes multiple contacts with different domains of the 23S rRNA in the assembled 50S subunit and ribosome. Its function is as follows. Forms part of the polypeptide exit tunnel. The sequence is that of Large ribosomal subunit protein uL4 from Trichormus variabilis (strain ATCC 29413 / PCC 7937) (Anabaena variabilis).